A 239-amino-acid chain; its full sequence is 3-dehydroquinate dehydratase (239 aa).

3-dehydroquinate-binding positions include 35 to 37 (ELR) and R70. The active-site Proton donor/acceptor is the H133. The active-site Schiff-base intermediate with substrate is K160. R202 and Q225 together coordinate 3-dehydroquinate.

This sequence belongs to the type-I 3-dehydroquinase family. As to quaternary structure, homodimer.

It carries out the reaction 3-dehydroquinate = 3-dehydroshikimate + H2O. Its pathway is metabolic intermediate biosynthesis; chorismate biosynthesis; chorismate from D-erythrose 4-phosphate and phosphoenolpyruvate: step 3/7. Involved in the third step of the chorismate pathway, which leads to the biosynthesis of aromatic amino acids. Catalyzes the cis-dehydration of 3-dehydroquinate (DHQ) and introduces the first double bond of the aromatic ring to yield 3-dehydroshikimate. The sequence is that of 3-dehydroquinate dehydratase from Staphylococcus saprophyticus subsp. saprophyticus (strain ATCC 15305 / DSM 20229 / NCIMB 8711 / NCTC 7292 / S-41).